The following is a 479-amino-acid chain: (R)-1-hydroxy-2-aminoethylphosphonate ammonia-lyase (479 aa).

At K317 the chain carries N6-(pyridoxal phosphate)lysine.

It belongs to the class-III pyridoxal-phosphate-dependent aminotransferase family. The cofactor is pyridoxal 5'-phosphate.

The catalysed reaction is (1R)-(2-amino-1-hydroxyethyl)phosphonate = phosphonoacetaldehyde + NH4(+). Its function is as follows. Involved in phosphonate degradation. Functions as a lyase that catalyzes an elimination reaction on the naturally occurring compound (R)-1-hydroxy-2-aminoethylphosphonate ((R)-HAEP), releasing ammonia and generating phosphonoacetaldehyde (PAA), which can be then hydrolyzed by PhnX, encoded by an adjacent gene. Thus, catalyzes a reaction that serves to funnel (R)-HAEP into the hydrolytic pathway for aminoethylphosphonate (AEP, the most common biogenic phosphonate) degradation, expanding the scope and the usefulness of the pathway itself. Is not active toward the (S) enantiomer of HAEP or other HAEP-related compounds such as ethanolamine and D,L-isoserine, indicating a very high substrate specificity. This Vibrio splendidus (strain 12B01) protein is (R)-1-hydroxy-2-aminoethylphosphonate ammonia-lyase.